A 465-amino-acid polypeptide reads, in one-letter code: Methylenetetrahydrofolate--tRNA-(uracil-5-)-methyltransferase TrmFO (465 aa).

Position 10–15 (10–15 (GAGLAG)) interacts with FAD.

Belongs to the MnmG family. TrmFO subfamily. Requires FAD as cofactor.

It localises to the cytoplasm. It catalyses the reaction uridine(54) in tRNA + (6R)-5,10-methylene-5,6,7,8-tetrahydrofolate + NADH + H(+) = 5-methyluridine(54) in tRNA + (6S)-5,6,7,8-tetrahydrofolate + NAD(+). It carries out the reaction uridine(54) in tRNA + (6R)-5,10-methylene-5,6,7,8-tetrahydrofolate + NADPH + H(+) = 5-methyluridine(54) in tRNA + (6S)-5,6,7,8-tetrahydrofolate + NADP(+). Functionally, catalyzes the folate-dependent formation of 5-methyl-uridine at position 54 (M-5-U54) in all tRNAs. This is Methylenetetrahydrofolate--tRNA-(uracil-5-)-methyltransferase TrmFO from Deinococcus radiodurans (strain ATCC 13939 / DSM 20539 / JCM 16871 / CCUG 27074 / LMG 4051 / NBRC 15346 / NCIMB 9279 / VKM B-1422 / R1).